Consider the following 52-residue polypeptide: uncharacterized protein (52 aa).

This is an uncharacterized protein from Bos taurus papillomavirus 4 (Bovine papillomavirus 4).